The sequence spans 223 residues: Agamous-like MADS-box protein AGL11 (223 aa).

The region spanning Met-1 to Asn-61 is the MADS-box domain. Positions Ala-87–Leu-177 constitute a K-box domain.

It localises to the nucleus. Its function is as follows. Probable transcription factor involved in seed development. The protein is Agamous-like MADS-box protein AGL11 of Vitis vinifera (Grape).